The following is a 284-amino-acid chain: Tropomyosin, smooth muscle/fibroblast CTM1 (284 aa).

The stretch at 1-284 (MEAIKKKMTM…DVTLQGIGDL (284 aa)) forms a coiled coil. The segment at 18-38 (AIDRAEQAETDKKSAEDKATG) is disordered.

Belongs to the tropomyosin family. Homodimer. Predominantly expressed in body wall muscle and heart, low in intestine, ovary and larval tail muscle.

The function of tropomyosin in smooth muscle and non-muscle cells is not clear. This Ciona intestinalis (Transparent sea squirt) protein is Tropomyosin, smooth muscle/fibroblast CTM1 (CTM1).